A 190-amino-acid polypeptide reads, in one-letter code: Protein GrpE (190 aa).

The span at 1–11 shows a compositional bias: polar residues; it reads MSNQDEPQNSP. The segment at 1-36 is disordered; it reads MSNQDEPQNSPEEFAEDQQADVALEEASSDSSETAA. The span at 13–28 shows a compositional bias: acidic residues; sequence EFAEDQQADVALEEAS.

The protein belongs to the GrpE family. In terms of assembly, homodimer.

It localises to the cytoplasm. Functionally, participates actively in the response to hyperosmotic and heat shock by preventing the aggregation of stress-denatured proteins, in association with DnaK and GrpE. It is the nucleotide exchange factor for DnaK and may function as a thermosensor. Unfolded proteins bind initially to DnaJ; upon interaction with the DnaJ-bound protein, DnaK hydrolyzes its bound ATP, resulting in the formation of a stable complex. GrpE releases ADP from DnaK; ATP binding to DnaK triggers the release of the substrate protein, thus completing the reaction cycle. Several rounds of ATP-dependent interactions between DnaJ, DnaK and GrpE are required for fully efficient folding. This chain is Protein GrpE, found in Teredinibacter turnerae (strain ATCC 39867 / T7901).